The following is a 391-amino-acid chain: Thioredoxin-interacting protein (391 aa).

Lysine 212 is covalently cross-linked (Glycyl lysine isopeptide (Lys-Gly) (interchain with G-Cter in ubiquitin)). Serine 361 carries the phosphoserine modification.

This sequence belongs to the arrestin family. In terms of assembly, homodimer; disulfide-linked. Interacts with TXN/thioredoxin through its redox-active site. Interacts with transcriptional repressors ZBTB16, ZBTB32 and HDAC1. Interacts with DDIT4. Post-translationally, ubiquitinated; undergoes heterotypic 'Lys-48'-/'Lys-63'-branched polyubiquitination catalyzed by ITCH and UBR5 resulting in proteasomal degradation. Deubiquitinated by USP5, leading to TXNIP stabilization.

The protein localises to the cytoplasm. In terms of biological role, may act as an oxidative stress mediator by inhibiting thioredoxin activity or by limiting its bioavailability. Interacts with COPS5 and restores COPS5-induced suppression of CDKN1B stability, blocking the COPS5-mediated translocation of CDKN1B from the nucleus to the cytoplasm. Functions as a transcriptional repressor, possibly by acting as a bridge molecule between transcription factors and corepressor complexes, and over-expression will induce G0/G1 cell cycle arrest. Required for the maturation of natural killer cells. Acts as a suppressor of tumor cell growth. Inhibits the proteasomal degradation of DDIT4, and thereby contributes to the inhibition of the mammalian target of rapamycin complex 1 (mTORC1). This is Thioredoxin-interacting protein (TXNIP) from Sus scrofa (Pig).